The chain runs to 251 residues: MTLNNQQLTLNCDMGESFGAWKMGADECVMPFVDMANIACGFHASDPNVMHDTITLANQHDVEIGAHPGYPDLQGFGRRSIKMTNDEITNMVIYQVGALQALCKAQYTDIGYIKPHGALYNDMMQSDGVFLAVVKAVALFKVPLMILASKENEKYLEIADDFDVPLLFEAFADRLYQDDGMLTPRTQPNAVLNSEHAILEQVRMLAESGRVKTASGQYILLEADTICVHGDNNESIALVQKIRQSLYTGGN.

Belongs to the LamB/PxpA family. In terms of assembly, forms a complex composed of PxpA, PxpB and PxpC.

The catalysed reaction is 5-oxo-L-proline + ATP + 2 H2O = L-glutamate + ADP + phosphate + H(+). In terms of biological role, catalyzes the cleavage of 5-oxoproline to form L-glutamate coupled to the hydrolysis of ATP to ADP and inorganic phosphate. The sequence is that of 5-oxoprolinase subunit A from Vibrio campbellii (strain ATCC BAA-1116).